The following is a 79-amino-acid chain: UPF0337 protein YhjA (79 aa).

Residues 1–30 (MALNDKLDATKDKVSGKVKETTGKVTGDEK) are disordered.

The protein belongs to the UPF0337 (CsbD) family.

In Lactococcus lactis subsp. lactis (strain IL1403) (Streptococcus lactis), this protein is UPF0337 protein YhjA (yhjA).